A 417-amino-acid chain; its full sequence is Serine hydroxymethyltransferase (417 aa).

(6S)-5,6,7,8-tetrahydrofolate contacts are provided by residues L121 and 125-127 (GHL). K229 carries the N6-(pyridoxal phosphate)lysine modification. 355-357 (SPF) lines the (6S)-5,6,7,8-tetrahydrofolate pocket.

It belongs to the SHMT family. In terms of assembly, homodimer. Pyridoxal 5'-phosphate serves as cofactor.

The protein localises to the cytoplasm. It carries out the reaction (6R)-5,10-methylene-5,6,7,8-tetrahydrofolate + glycine + H2O = (6S)-5,6,7,8-tetrahydrofolate + L-serine. It functions in the pathway one-carbon metabolism; tetrahydrofolate interconversion. It participates in amino-acid biosynthesis; glycine biosynthesis; glycine from L-serine: step 1/1. Its function is as follows. Catalyzes the reversible interconversion of serine and glycine with tetrahydrofolate (THF) serving as the one-carbon carrier. This reaction serves as the major source of one-carbon groups required for the biosynthesis of purines, thymidylate, methionine, and other important biomolecules. Also exhibits THF-independent aldolase activity toward beta-hydroxyamino acids, producing glycine and aldehydes, via a retro-aldol mechanism. This is Serine hydroxymethyltransferase from Tolumonas auensis (strain DSM 9187 / NBRC 110442 / TA 4).